Reading from the N-terminus, the 526-residue chain is Glucose-6-phosphate isomerase (526 aa).

Glutamate 320 acts as the Proton donor in catalysis. Active-site residues include histidine 349 and lysine 453.

It belongs to the GPI family.

The protein resides in the cytoplasm. It catalyses the reaction alpha-D-glucose 6-phosphate = beta-D-fructose 6-phosphate. The protein operates within carbohydrate biosynthesis; gluconeogenesis. Its pathway is carbohydrate degradation; glycolysis; D-glyceraldehyde 3-phosphate and glycerone phosphate from D-glucose: step 2/4. In terms of biological role, catalyzes the reversible isomerization of glucose-6-phosphate to fructose-6-phosphate. This chain is Glucose-6-phosphate isomerase, found in Gloeothece citriformis (strain PCC 7424) (Cyanothece sp. (strain PCC 7424)).